We begin with the raw amino-acid sequence, 454 residues long: Bleomycin hydrolase (454 aa).

Position 1 is an N-acetylmethionine (Met1). Catalysis depends on residues Cys73 and His372. Position 391 is an N6-acetyllysine (Lys391). Residue Asn396 is part of the active site.

Belongs to the peptidase C1 family. In terms of assembly, homohexamer. Interacts with NUDT12 (via ANK repeats). In terms of tissue distribution, expressed at relatively higher levels in the stomach, esophagus, spleen, thymus and testis, and at lower levels in the skin, lung and skeletal muscle.

Its subcellular location is the cytoplasm. It is found in the cytoplasmic granule. The enzyme catalyses Inactivates bleomycin B2 (a cytotoxic glycometallopeptide) by hydrolysis of a carboxyamide bond of beta-aminoalanine, but also shows general aminopeptidase activity. The specificity varies somewhat with source, but amino acid arylamides of Met, Leu and Ala are preferred.. Functionally, the normal physiological role of BLM hydrolase is unknown, but it catalyzes the inactivation of the antitumor drug BLM (a glycopeptide) by hydrolyzing the carboxamide bond of its B-aminoalaninamide moiety thus protecting normal and malignant cells from BLM toxicity. Binds single-stranded DNA with higher affinity than double-stranded DNA. May play an important role in the metabolism of antibiotics. The protein is Bleomycin hydrolase (Blmh) of Rattus norvegicus (Rat).